Consider the following 394-residue polypeptide: T-cell acute lymphocytic leukemia protein 1 (394 aa).

Residues 1–17 (MSLKMMERLSTDMDGTR) show a composition bias toward basic and acidic residues. The interval 1–49 (MSLKMMERLSTDMDGTRDVASPPARQDAAEPERTVELSGVKEGAAPNSP) is disordered. 7 repeat units span residues 83-89 (TELCRAT), 94-100 (TELCRAP), 105-111 (TELCRAP), 116-122 (TELCRAP), 127-133 (TELCRPP), 149-155 (SELCRAP), and 167-173 (TELCRPP). The segment at 83–173 (TELCRATLTP…TATTELCRPP (91 aa)) is 7 X 7 AA approximate repeats of [TS]-E-L-C-R-[AP]-P. The bHLH domain occupies 262–314 (VRRIFTNSRERWRQQNVNGAFAELRKLIPTHPPDKKLSKNEILRLAMKYINFL). Positions 347–394 (LSPNSSCGSSLDGAPSPDSYSEEHDALDSKHSRNLHQAMLPIDGSGQR) are disordered. The span at 367–377 (SEEHDALDSKH) shows a compositional bias: basic and acidic residues.

As to expression, first expressed in patches on the ventral side of the embryo in a region that will give rise to hematopoietic tissue. By late neurula stages, expressed throughout the ventral blood island region. By tailbud stages, expression extends to probable vascular progenitor cells, but is excluded from the presumptive liver anlage. Also expressed in the central nervous system at the tailbud stage.

The protein resides in the nucleus. Functionally, transcription factor that acts synergistically with lmo2 and gata1 to specify embryonic dorsal mesoderm to a hematopoietic fate. The sequence is that of T-cell acute lymphocytic leukemia protein 1 from Xenopus laevis (African clawed frog).